Reading from the N-terminus, the 91-residue chain is PqqA binding protein (91 aa).

This sequence belongs to the PqqD family. Monomer. Interacts with PqqE.

It participates in cofactor biosynthesis; pyrroloquinoline quinone biosynthesis. Functions as a PqqA binding protein and presents PqqA to PqqE, in the pyrroloquinoline quinone (PQQ) biosynthetic pathway. The chain is PqqA binding protein from Pseudomonas fluorescens (strain ATCC BAA-477 / NRRL B-23932 / Pf-5).